The primary structure comprises 324 residues: Probable UDP-sugar transporter protein SLC35A4 (324 aa).

Residues 1-18 lie on the Cytoplasmic side of the membrane; it reads MSVEDGGMPGLGRPRQAR. A helical transmembrane segment spans residues 19 to 39; the sequence is WTLMLLLSTAMYGAHAPLLAL. At 40 to 52 the chain is on the lumenal side; that stretch reads CHVDGRVPFRPSS. A helical transmembrane segment spans residues 53 to 73; that stretch reads AVLLTELTKLLLCAFSLLVGW. Residues 74–85 lie on the Cytoplasmic side of the membrane; that stretch reads QAWPQGPPPWRQ. Residues 86–106 form a helical membrane-spanning segment; it reads AAPFALSALLYGANNNLVIYL. Over 107-142 the chain is Lumenal; the sequence is QRYMDPSTYQVLSNLKIGSTAVLYCLCLRHRLSVRQ. A helical membrane pass occupies residues 143-163; it reads GLALLLLMAAGACYAAGGLQV. Over 164 to 180 the chain is Cytoplasmic; that stretch reads PGNTLPSPPPAAAASPM. Residues 181 to 201 form a helical membrane-spanning segment; that stretch reads PLHITPLGLLLLILYCLISGL. The Lumenal segment spans residues 202-214; sequence SSVYTELLMKRQR. A helical membrane pass occupies residues 215–235; it reads LPLALQNLFLYTFGVLLNLGL. Over 236-250 the chain is Cytoplasmic; sequence HAGGGSGPGLLEGFS. A helical transmembrane segment spans residues 251 to 271; the sequence is GWAALVVLSQALNGLLMSAVM. Residues 272–275 lie on the Lumenal side of the membrane; sequence KHGS. The chain crosses the membrane as a helical span at residues 276-298; sequence SITRLFVVSCSLVVNAVLSAVLL. At 299–324 the chain is on the cytoplasmic side; the sequence is RLQLTAAFFLATLLIGLAMRLYYGSR.

The protein belongs to the nucleotide-sugar transporter family. SLC35A subfamily. In terms of assembly, found in a complex with SLC35A2 and SLC35A3.

The protein localises to the golgi apparatus membrane. It carries out the reaction CDP-L-ribitol(in) + CDP(out) = CDP-L-ribitol(out) + CDP(in). Functionally, mediates the transport of CDP-ribitol. Does not exhibit CMP-sialic acid, UDP-galactose and UDP-N-acetylglucosamine transport activity. This is Probable UDP-sugar transporter protein SLC35A4 from Homo sapiens (Human).